We begin with the raw amino-acid sequence, 391 residues long: Protein kinase ORF14 (391 aa).

The region spanning 109–391 (VPLRHTRGNI…ETLVDEFSKI (283 aa)) is the Protein kinase domain. An ATP-binding site is contributed by Lys134. The active-site Proton acceptor is the Asp235.

This sequence belongs to the protein kinase superfamily. Ser/Thr protein kinase family.

The enzyme catalyses L-seryl-[protein] + ATP = O-phospho-L-seryl-[protein] + ADP + H(+). It carries out the reaction L-threonyl-[protein] + ATP = O-phospho-L-threonyl-[protein] + ADP + H(+). This is Protein kinase ORF14 (ORF14) from Ictalurid herpesvirus 1 (strain Auburn) (IcHV-1).